The following is a 513-amino-acid chain: MQLNPSEISELIKSRIQGLEASADVRNQGTVISVTDGIVRIHGLSDVMQGEMLEFPGNTFGLALNLERDSVGAVILGEYEHISEGDIVKTTGRILEVPVGPELVGRVVDALGNPIDGKGPVNAKLTDAIEKIAPGVIWRKSVSQPVQTGIKSIDAMVPIGRGQRELIIGDRQCGKTAVALDAIINQKGKDLICIYVAIGQKASSIMNVVRKLEETGAMEYTIVVAASASDSAAMQYLAPYAGCTMGEYFRDRGQDALIIYDDLTKQAWAYRQISLLLRRPPGREAYPGDVFYLHSRLLERAARVSEEYVEKFTNGEVKGKSGSLTALPVIETQAGDVTAFVPTNVISITDGQIFLETDLFNAGIRPAINAGVSVSRVGGAAQTKVVKKLSGGIRTDLAQYRELAAFAQFASDLDEATRKQLERGRRVTELLKQPQYQPLQVWELAVSLYAANNGYLDDLDVKQVLSFEKGLRDNLKTSHADLIKRIEDTKDLSKDDEGALRSAIEAFKKSGAY.

169-176 (GDRQCGKT) serves as a coordination point for ATP.

Belongs to the ATPase alpha/beta chains family. As to quaternary structure, F-type ATPases have 2 components, CF(1) - the catalytic core - and CF(0) - the membrane proton channel. CF(1) has five subunits: alpha(3), beta(3), gamma(1), delta(1), epsilon(1). CF(0) has three main subunits: a(1), b(2) and c(9-12). The alpha and beta chains form an alternating ring which encloses part of the gamma chain. CF(1) is attached to CF(0) by a central stalk formed by the gamma and epsilon chains, while a peripheral stalk is formed by the delta and b chains.

The protein localises to the cell inner membrane. It carries out the reaction ATP + H2O + 4 H(+)(in) = ADP + phosphate + 5 H(+)(out). Its function is as follows. Produces ATP from ADP in the presence of a proton gradient across the membrane. The alpha chain is a regulatory subunit. This chain is ATP synthase subunit alpha, found in Burkholderia cenocepacia (strain ATCC BAA-245 / DSM 16553 / LMG 16656 / NCTC 13227 / J2315 / CF5610) (Burkholderia cepacia (strain J2315)).